The sequence spans 304 residues: Probable alpha-L-glutamate ligase 2 (304 aa).

The 184-residue stretch at 107–290 (HQLLARKGVG…IAGAIIDYIV (184 aa)) folds into the ATP-grasp domain. Residues Lys144, 181–182 (EF), Asp190, and 214–216 (RSN) each bind ATP. Residues Asp251, Glu263, and Asn265 each contribute to the Mg(2+) site. Residues Asp251, Glu263, and Asn265 each contribute to the Mn(2+) site.

The protein belongs to the RimK family. It depends on Mg(2+) as a cofactor. Requires Mn(2+) as cofactor.

The polypeptide is Probable alpha-L-glutamate ligase 2 (Hahella chejuensis (strain KCTC 2396)).